A 392-amino-acid polypeptide reads, in one-letter code: MSDMLPLATYSLNVEPYSPTPALNFKIPVTIRITMAAIDPEPFDDDKKPSTLRIIKRNPELTRGEYYNQDNNDGLEEDESESEQEADVPKRSVKSKKGKAVEQSESEDSEDENEIDDEFEECVLLTLSPKGQYQQALDITIAPEEDVQFVVTGSYTISLTGNYVKHPFDNSSDSDEDEEDYYSDEESSNGEEEEEEEEEDDEELSSGDDDLDDLVDASDIESRLDELVKKDEKKKNNKKDSKRKHEEDEEESAKPAEKKQTTKKDKKAEKVKDSEESKPKPKTKLLEGGIIIEDRVTGKGPHAKKGTRVGMRYVGKLKNGKVFDKNTKGKPFVFKLGQGEVIKGWDIGVAGMAVGGERRIVIPAPYAYGKQALPGIPANSELTFDVKLVSMK.

Disordered stretches follow at residues 58-116 and 161-284; these read NPEL…NEID and GNYV…PKTK. Composition is skewed to acidic residues over residues 73-86, 104-116, and 172-219; these read DGLE…EQEA, SESE…NEID, and SDSD…DASD. Phosphoserine is present on residues Ser-80 and Ser-82. Basic and acidic residues-rich tracts occupy residues 220-234 and 252-279; these read IESR…DEKK and SAKP…ESKP. One can recognise a PPIase FKBP-type domain in the interval 306-392; it reads GTRVGMRYVG…TFDVKLVSMK (87 aa).

Belongs to the FKBP-type PPIase family. FKBP3/4 subfamily. As to quaternary structure, binds to histones H3 and H4. Interacts with NOP53.

The protein resides in the nucleus. The enzyme catalyses [protein]-peptidylproline (omega=180) = [protein]-peptidylproline (omega=0). Functionally, PPIase that acts as a histone chaperone. Histone proline isomerase that increases the rate of cis-trans isomerization at 'Pro-17' (H3P16), 'Pro-31' (H3P30) and 'Pro-39 (H3P38) on the histone H3 N-terminal tail. H3P16 and H3P30 are the major proline targets with little activity shown against H3P38. H3P38 isomerization influences SET2-mediated H3K36 methylation thereby regulating gene expression. The protein is FK506-binding protein 4 of Saccharomyces cerevisiae (strain ATCC 204508 / S288c) (Baker's yeast).